We begin with the raw amino-acid sequence, 719 residues long: Protein Hook homolog 3 (719 aa).

The region spanning 7–123 (VDLCESLLTW…RMLQLILGCA (117 aa)) is the Calponin-homology (CH) domain. Coiled-coil stretches lie at residues 162 to 431 (SIGT…QAQE) and 459 to 665 (EIKE…IVSA). A disordered region spans residues 679–719 (EDRLASTGSGQSFLARQRQATSSRRSYPGHVQPATASDVIA). Positions 693–704 (ARQRQATSSRRS) are enriched in low complexity.

The protein belongs to the hook family. Interacts with microtubules.

It is found in the cytoplasm. The protein localises to the cytoskeleton. The protein resides in the golgi apparatus. Acts as an adapter protein linking the dynein motor complex to various cargos and converts dynein from a non-processive to a highly processive motor in the presence of dynactin. Facilitates the interaction between dynein and dynactin and activates dynein processivity (the ability to move along a microtubule for a long distance without falling off the track). Predominantly recruits 2 dyneins, which increases both the force and speed of the microtubule motor. Component of the FTS/Hook/FHIP complex (FHF complex). The FHF complex may function to promote vesicle trafficking and/or fusion via the homotypic vesicular protein sorting complex (the HOPS complex). May regulate clearance of endocytosed receptors such as MSR1. Participates in defining the architecture and localization of the Golgi complex. FHF complex promotes the distribution of AP-4 complex to the perinuclear area of the cell. This is Protein Hook homolog 3 (hook3) from Xenopus laevis (African clawed frog).